The chain runs to 245 residues: Ribonuclease PH (245 aa).

Residues Arg-86 and Gly-124–Arg-126 each bind phosphate.

It belongs to the RNase PH family. Homohexameric ring arranged as a trimer of dimers.

The catalysed reaction is tRNA(n+1) + phosphate = tRNA(n) + a ribonucleoside 5'-diphosphate. Its function is as follows. Phosphorolytic 3'-5' exoribonuclease that plays an important role in tRNA 3'-end maturation. Removes nucleotide residues following the 3'-CCA terminus of tRNAs; can also add nucleotides to the ends of RNA molecules by using nucleoside diphosphates as substrates, but this may not be physiologically important. Probably plays a role in initiation of 16S rRNA degradation (leading to ribosome degradation) during starvation. The protein is Ribonuclease PH of Bacillus cereus (strain B4264).